The following is a 292-amino-acid chain: 4-hydroxy-tetrahydrodipicolinate synthase (292 aa).

Residue threonine 45 participates in pyruvate binding. Tyrosine 133 acts as the Proton donor/acceptor in catalysis. Lysine 161 functions as the Schiff-base intermediate with substrate in the catalytic mechanism. Isoleucine 203 lines the pyruvate pocket.

This sequence belongs to the DapA family. In terms of assembly, homotetramer; dimer of dimers.

The protein resides in the cytoplasm. It catalyses the reaction L-aspartate 4-semialdehyde + pyruvate = (2S,4S)-4-hydroxy-2,3,4,5-tetrahydrodipicolinate + H2O + H(+). It participates in amino-acid biosynthesis; L-lysine biosynthesis via DAP pathway; (S)-tetrahydrodipicolinate from L-aspartate: step 3/4. Catalyzes the condensation of (S)-aspartate-beta-semialdehyde [(S)-ASA] and pyruvate to 4-hydroxy-tetrahydrodipicolinate (HTPA). The polypeptide is 4-hydroxy-tetrahydrodipicolinate synthase (Shigella boydii serotype 18 (strain CDC 3083-94 / BS512)).